A 262-amino-acid chain; its full sequence is Acetylglutamate kinase (262 aa).

Substrate is bound by residues 48 to 49 (GG), arginine 70, and asparagine 162.

It belongs to the acetylglutamate kinase family. ArgB subfamily.

The protein localises to the cytoplasm. The enzyme catalyses N-acetyl-L-glutamate + ATP = N-acetyl-L-glutamyl 5-phosphate + ADP. Its pathway is amino-acid biosynthesis; L-arginine biosynthesis; N(2)-acetyl-L-ornithine from L-glutamate: step 2/4. Its function is as follows. Catalyzes the ATP-dependent phosphorylation of N-acetyl-L-glutamate. This chain is Acetylglutamate kinase, found in Vibrio cholerae serotype O1 (strain ATCC 39541 / Classical Ogawa 395 / O395).